The chain runs to 879 residues: Alanine--tRNA ligase (879 aa).

Residues His-566, His-570, Cys-668, and His-672 each contribute to the Zn(2+) site.

The protein belongs to the class-II aminoacyl-tRNA synthetase family. Zn(2+) serves as cofactor.

It localises to the cytoplasm. It carries out the reaction tRNA(Ala) + L-alanine + ATP = L-alanyl-tRNA(Ala) + AMP + diphosphate. Its function is as follows. Catalyzes the attachment of alanine to tRNA(Ala) in a two-step reaction: alanine is first activated by ATP to form Ala-AMP and then transferred to the acceptor end of tRNA(Ala). Also edits incorrectly charged Ser-tRNA(Ala) and Gly-tRNA(Ala) via its editing domain. The polypeptide is Alanine--tRNA ligase (Clostridium botulinum (strain Alaska E43 / Type E3)).